The following is a 246-amino-acid chain: Large ribosomal subunit protein uL3 (246 aa).

Residues 140 to 162 (SHRSIGSTGGRQDPGKTFKNKKM) are disordered. Residue Gln151 is modified to N5-methylglutamine.

It belongs to the universal ribosomal protein uL3 family. As to quaternary structure, part of the 50S ribosomal subunit. Forms a cluster with proteins L14 and L19. In terms of processing, methylated by PrmB.

One of the primary rRNA binding proteins, it binds directly near the 3'-end of the 23S rRNA, where it nucleates assembly of the 50S subunit. In Methylobacterium sp. (strain 4-46), this protein is Large ribosomal subunit protein uL3.